Consider the following 303-residue polypeptide: Tyrosine recombinase XerC (303 aa).

The 87-residue stretch at 6 to 92 (ASLAPQVEAF…ALRSFLNWLV (87 aa)) folds into the Core-binding (CB) domain. The 180-residue stretch at 113–292 (HLPKNIDVDE…DFQHLATVYD (180 aa)) folds into the Tyr recombinase domain. Catalysis depends on residues Arg-152, Lys-176, His-244, Arg-247, and His-270. The active-site O-(3'-phospho-DNA)-tyrosine intermediate is Tyr-279.

This sequence belongs to the 'phage' integrase family. XerC subfamily. Forms a cyclic heterotetrameric complex composed of two molecules of XerC and two molecules of XerD, in which XerC interacts with XerD via its C-terminal region, XerD interacts with XerC via its C-terminal region and so on.

The protein resides in the cytoplasm. With respect to regulation, ftsK may regulate the catalytic switch between XerC and XerD in the heterotetrameric complex during the two steps of the recombination process. Functionally, site-specific tyrosine recombinase, which acts by catalyzing the cutting and rejoining of the recombining DNA molecules. Binds cooperatively to specific DNA consensus sequences that are separated from XerD binding sites by a short central region, forming the heterotetrameric XerC-XerD complex that recombines DNA substrates. The complex is essential to convert dimers of the bacterial chromosome into monomers to permit their segregation at cell division. It also contributes to the segregational stability of plasmids. In the complex XerC specifically exchanges the top DNA strands. The protein is Tyrosine recombinase XerC of Yersinia pestis.